We begin with the raw amino-acid sequence, 110 residues long: Envelope glycoprotein N (110 aa).

Residues methionine 1–glycine 17 form the signal peptide. Topologically, residues histidine 18–alanine 80 are virion surface. The span at valine 28–glycine 41 shows a compositional bias: polar residues. Positions valine 28–threonine 51 are disordered. The chain crosses the membrane as a helical span at residues leucine 81 to phenylalanine 101. Residues lysine 102–alanine 110 lie on the Intravirion side of the membrane.

The protein belongs to the herpesviridae glycoprotein N family. Interacts (via N-terminus) with gM (via N-terminus). The gM-gN heterodimer forms the gCII complex. O-glycosylated. Contains alpha 2,6-sialic acid residues. N-glycosylated.

The protein localises to the virion membrane. It is found in the host membrane. Its subcellular location is the host Golgi apparatus. The protein resides in the host trans-Golgi network. Envelope glycoprotein necessary for proper maturation of gM and modulation of its membrane fusion activity. Also plays a critical role in virion morphogenesis. This chain is Envelope glycoprotein N, found in Homo sapiens (Human).